The primary structure comprises 48 residues: MARYRCCRSPSRSRCRRRRRRFYRRRRRCHRRRRRCCRRRYTRRCKRY.

This sequence belongs to the protamine P1 family. Cross-linked by interchain disulfide bonds around the DNA-helix. Testis.

Its subcellular location is the nucleus. The protein resides in the chromosome. Its function is as follows. Protamines substitute for histones in the chromatin of sperm during the haploid phase of spermatogenesis. They compact sperm DNA into a highly condensed, stable and inactive complex. In Cavia porcellus (Guinea pig), this protein is Sperm protamine P1 (PRM1).